The primary structure comprises 155 residues: Ribosomal RNA large subunit methyltransferase H (155 aa).

S-adenosyl-L-methionine is bound by residues L72, G103, and 122 to 127 (LSDLTL).

The protein belongs to the RNA methyltransferase RlmH family. In terms of assembly, homodimer.

It is found in the cytoplasm. It catalyses the reaction pseudouridine(1915) in 23S rRNA + S-adenosyl-L-methionine = N(3)-methylpseudouridine(1915) in 23S rRNA + S-adenosyl-L-homocysteine + H(+). Functionally, specifically methylates the pseudouridine at position 1915 (m3Psi1915) in 23S rRNA. In Albidiferax ferrireducens (strain ATCC BAA-621 / DSM 15236 / T118) (Rhodoferax ferrireducens), this protein is Ribosomal RNA large subunit methyltransferase H.